Consider the following 307-residue polypeptide: Ribosomal RNA small subunit methyltransferase H (307 aa).

S-adenosyl-L-methionine-binding positions include 33–35 (AGH), Asp52, Leu83, Asp97, and Gln104.

This sequence belongs to the methyltransferase superfamily. RsmH family.

It localises to the cytoplasm. The enzyme catalyses cytidine(1402) in 16S rRNA + S-adenosyl-L-methionine = N(4)-methylcytidine(1402) in 16S rRNA + S-adenosyl-L-homocysteine + H(+). Specifically methylates the N4 position of cytidine in position 1402 (C1402) of 16S rRNA. This chain is Ribosomal RNA small subunit methyltransferase H, found in Sulfurovum sp. (strain NBC37-1).